A 208-amino-acid chain; its full sequence is Small ribosomal subunit protein uS4 (208 aa).

Residues 98-158 (SRLDNAVYRL…EKSRNMQVID (61 aa)) enclose the S4 RNA-binding domain.

It belongs to the universal ribosomal protein uS4 family. Part of the 30S ribosomal subunit. Contacts protein S5. The interaction surface between S4 and S5 is involved in control of translational fidelity.

Functionally, one of the primary rRNA binding proteins, it binds directly to 16S rRNA where it nucleates assembly of the body of the 30S subunit. With S5 and S12 plays an important role in translational accuracy. The polypeptide is Small ribosomal subunit protein uS4 (Desulfosudis oleivorans (strain DSM 6200 / JCM 39069 / Hxd3) (Desulfococcus oleovorans)).